Consider the following 60-residue polypeptide: Large ribosomal subunit protein bL32 (60 aa).

Positions 1–16 (MAVPRRKTSPSRRGMR) are enriched in basic residues. Residues 1–60 (MAVPRRKTSPSRRGMRRSADALKRPTYAEDKDSGELRRPHHLDLKTGMYKGRQVIKKKDA) form a disordered region. Basic and acidic residues predominate over residues 17–44 (RSADALKRPTYAEDKDSGELRRPHHLDL).

The protein belongs to the bacterial ribosomal protein bL32 family.

The sequence is that of Large ribosomal subunit protein bL32 from Rhodopseudomonas palustris (strain BisB5).